We begin with the raw amino-acid sequence, 246 residues long: 14-3-3 protein eta (246 aa).

Position 2 is an N-acetylglycine (Gly-2). Ser-25 and Ser-59 each carry phosphoserine.

Belongs to the 14-3-3 family. As to quaternary structure, homodimer. Interacts with many nuclear hormone receptors and cofactors including AR, ESR1, ESR2, MC2R, NR3C1, NRIP1, PPARBP and THRA. Interacts with ABL1 (phosphorylated form); the interaction retains it in the cytoplasm. Weakly interacts with CDKN1B. Interacts with ARHGEF28 and CDK16. Interacts with GAB2. Interacts with KCNK18 in a phosphorylation-dependent manner. Interacts with SAMSN1. Interacts with the 'Ser-241' phosphorylated form of PDPK1. Interacts with the 'Thr-369' phosphorylated form of DAPK2. Interacts with PI4KB, TBC1D22A and TBC1D22B. Interacts with SLITRK1. Interacts with MEFV. Post-translationally, phosphorylated on Ser-59 by protein kinase C delta type catalytic subunit in a sphingosine-dependent fashion.

It localises to the cytoplasm. Functionally, adapter protein implicated in the regulation of a large spectrum of both general and specialized signaling pathways. Binds to a large number of partners, usually by recognition of a phosphoserine or phosphothreonine motif. Binding generally results in the modulation of the activity of the binding partner. Negatively regulates the kinase activity of PDPK1. This Bos taurus (Bovine) protein is 14-3-3 protein eta (YWHAH).